The following is a 298-amino-acid chain: ADP/ATP translocase 1 (298 aa).

The Mitochondrial intermembrane portion of the chain corresponds to Met1–Ser7. Gly2 is modified (N-acetylglycine). The Solcar 1 repeat unit spans residues Trp6–Leu98. Ser7 is modified (phosphoserine). Residues Phe8 to Gln37 traverse the membrane as a helical segment. The Mitochondrial matrix portion of the chain corresponds to Val38–Asn74. An N6,N6,N6-trimethyllysine modification is found at Lys52. A helical transmembrane segment spans residues Leu75–Phe99. 2 residues coordinate ADP: Arg80 and Lys92. At Leu100–Phe109 the chain is on the mitochondrial intermembrane side. Residues Trp110–Phe130 traverse the membrane as a helical segment. 2 Solcar repeats span residues Arg111–Met201 and Val212–Tyr297. The Mitochondrial matrix portion of the chain corresponds to Val131 to Asn178. At Lys147 the chain carries N6-succinyllysine. An S-nitrosocysteine modification is found at Cys160. A helical transmembrane segment spans residues Val179 to Lys199. Residues Gly200–Ile210 lie on the Mitochondrial intermembrane side of the membrane. The chain crosses the membrane as a helical span at residues Phe211–Phe231. The Mitochondrial matrix segment spans residues Asp232 to Gly273. Arg235 contacts ADP. The segment at Arg235 to Met240 is important for transport activity. The short motif at Arg235–Met240 is the Nucleotide carrier signature motif element. Lys245 and Lys272 each carry N6-succinyllysine. A helical transmembrane segment spans residues Ala274–Tyr291. Residues Asp292–Val298 lie on the Mitochondrial intermembrane side of the membrane.

Belongs to the mitochondrial carrier (TC 2.A.29) family. In terms of assembly, monomer. Found in a complex with ARL2, ARL2BP and SLC25A4/ANT1. Interacts with ARL2BP. Interacts with ARHGAP11B, thereby inhibiting the mitochondrial permeability transition pore (mPTP). Interacts with TIMM44; leading to inhibit the presequence translocase TIMM23, thereby promoting stabilization of PINK1. (Microbial infection) Interacts with HIV-1 Vpr. Under cell death induction, transglutaminated by TGM2. Transglutamination leads to formation of covalent cross-links between a glutamine and the epsilon-amino group of a lysine residue, forming polymers. As to expression, expressed in erythrocytes (at protein level).

Its subcellular location is the mitochondrion inner membrane. It localises to the membrane. The catalysed reaction is ADP(in) + ATP(out) = ADP(out) + ATP(in). The enzyme catalyses H(+)(in) = H(+)(out). Its activity is regulated as follows. The matrix-open state (m-state) is inhibited by the membrane-permeable bongkrekic acid (BKA). The cytoplasmic-open state (c-state) is inhibited by the membrane-impermeable toxic inhibitor carboxyatractyloside (CATR). Proton transporter activity is inhibited by ADP:ATP antiporter activity. In terms of biological role, ADP:ATP antiporter that mediates import of ADP into the mitochondrial matrix for ATP synthesis, and export of ATP out to fuel the cell. Cycles between the cytoplasmic-open state (c-state) and the matrix-open state (m-state): operates by the alternating access mechanism with a single substrate-binding site intermittently exposed to either the cytosolic (c-state) or matrix (m-state) side of the inner mitochondrial membrane. In addition to its ADP:ATP antiporter activity, also involved in mitochondrial uncoupling and mitochondrial permeability transition pore (mPTP) activity. Plays a role in mitochondrial uncoupling by acting as a proton transporter: proton transport uncouples the proton flows via the electron transport chain and ATP synthase to reduce the efficiency of ATP production and cause mitochondrial thermogenesis. Proton transporter activity is inhibited by ADP:ATP antiporter activity, suggesting that SLC25A4/ANT1 acts as a master regulator of mitochondrial energy output by maintaining a delicate balance between ATP production (ADP:ATP antiporter activity) and thermogenesis (proton transporter activity). Proton transporter activity requires free fatty acids as cofactor, but does not transport it. Also plays a key role in mPTP opening, a non-specific pore that enables free passage of the mitochondrial membranes to solutes of up to 1.5 kDa, and which contributes to cell death. It is however unclear if SLC25A4/ANT1 constitutes a pore-forming component of mPTP or regulates it. Acts as a regulator of mitophagy independently of ADP:ATP antiporter activity: promotes mitophagy via interaction with TIMM44, leading to inhibit the presequence translocase TIMM23, thereby promoting stabilization of PINK1. The protein is ADP/ATP translocase 1 of Homo sapiens (Human).